We begin with the raw amino-acid sequence, 575 residues long: G protein-coupled receptor kinase 4 (575 aa).

Residue methionine 1 is modified to N-acetylmethionine. The N-terminal stretch occupies residues methionine 1–leucine 153. Residues aspartate 51–leucine 171 form the RGS domain. One can recognise a Protein kinase domain in the interval phenylalanine 186–phenylalanine 448. ATP-binding positions include leucine 192–valine 200 and lysine 215. Catalysis depends on aspartate 311, which acts as the Proton acceptor. In terms of domain architecture, AGC-kinase C-terminal spans lysine 449 to glutamate 514. At serine 484 the chain carries Phosphoserine.

It belongs to the protein kinase superfamily. AGC Ser/Thr protein kinase family. GPRK subfamily. Interacts with DRD3. Post-translationally, palmitoylated. In terms of tissue distribution, isoform GRK4A is expressed in testis. Isoform GRK4B is heterogeneously distributed in the kidney, with 20-fold enrichment in the outer medulla. Has a widespread but low level of expression in tissues other than testis.

The protein localises to the cytoplasm. It is found in the cell cortex. The enzyme catalyses [G-protein-coupled receptor] + ATP = [G-protein-coupled receptor]-phosphate + ADP + H(+). With respect to regulation, inhibited by heparin. Its function is as follows. Specifically phosphorylates the activated forms of G protein-coupled receptors. Plays an important role in the regulation of renal sodium handling and blood pressure. The protein is G protein-coupled receptor kinase 4 (Grk4) of Rattus norvegicus (Rat).